A 167-amino-acid polypeptide reads, in one-letter code: Antibacterial peptide PMAP-37 (167 aa).

A signal peptide spans 1 to 29 (METQRASLCLGRWSLWLLLLALVVPSASA). Residues 30 to 130 (QALSYREAVL…DITCNEIQSV (101 aa)) constitute a propeptide that is removed on maturation. Intrachain disulfides connect cysteine 85–cysteine 96 and cysteine 107–cysteine 124.

Belongs to the cathelicidin family.

It localises to the secreted. Functionally, exerts antimicrobial activity against both Gram-positive and negative bacteria with minimal inhibitory concentrations ranging over 1-4 micro molar. Its activity appears to be mediated by its ability to damage bacterial membranes. This chain is Antibacterial peptide PMAP-37 (PMAP37), found in Sus scrofa (Pig).